The chain runs to 356 residues: Isopentenyl-diphosphate delta-isomerase (356 aa).

8–9 (RK) is a binding site for substrate. FMN is bound by residues 66 to 68 (AIT), serine 96, and asparagine 124. A substrate-binding site is contributed by 96–98 (SQR). Glutamine 160 lines the substrate pocket. Glutamate 161 serves as a coordination point for Mg(2+). Residues lysine 201, threonine 231, 280–282 (GIR), and 301–302 (AL) contribute to the FMN site.

It belongs to the IPP isomerase type 2 family. In terms of assembly, homooctamer. Dimer of tetramers. FMN serves as cofactor. Requires NADPH as cofactor. It depends on Mg(2+) as a cofactor.

Its subcellular location is the cytoplasm. It carries out the reaction isopentenyl diphosphate = dimethylallyl diphosphate. Its function is as follows. Involved in the biosynthesis of isoprenoids. Catalyzes the 1,3-allylic rearrangement of the homoallylic substrate isopentenyl (IPP) to its allylic isomer, dimethylallyl diphosphate (DMAPP). The protein is Isopentenyl-diphosphate delta-isomerase of Methanococcus aeolicus (strain ATCC BAA-1280 / DSM 17508 / OCM 812 / Nankai-3).